The following is a 214-amino-acid chain: Urease accessory protein UreF (214 aa).

The disordered stretch occupies residues 70 to 95; that stretch reads AAAGEAGDAETDARTPSPAARAASRA. A compositionally biased stretch (low complexity) spans 83 to 95; sequence RTPSPAARAASRA.

This sequence belongs to the UreF family. UreD, UreF and UreG form a complex that acts as a GTP-hydrolysis-dependent molecular chaperone, activating the urease apoprotein by helping to assemble the nickel containing metallocenter of UreC. The UreE protein probably delivers the nickel.

Its subcellular location is the cytoplasm. In terms of biological role, required for maturation of urease via the functional incorporation of the urease nickel metallocenter. In Mycolicibacterium vanbaalenii (strain DSM 7251 / JCM 13017 / BCRC 16820 / KCTC 9966 / NRRL B-24157 / PYR-1) (Mycobacterium vanbaalenii), this protein is Urease accessory protein UreF.